Here is an 85-residue protein sequence, read N- to C-terminus: Beta-insect depressant toxin LqhIT2 (85 aa).

The first 21 residues, Met1–Ala21, serve as a signal peptide directing secretion. The LCN-type CS-alpha/beta domain maps to Asp22 to Gly82. 4 disulfide bridges follow: Cys31/Cys81, Cys35/Cys56, Cys42/Cys63, and Cys46/Cys65. Residue Gly82 is modified to Glycine amide.

The protein belongs to the long (4 C-C) scorpion toxin superfamily. Sodium channel inhibitor family. Beta subfamily. In terms of tissue distribution, expressed by the venom gland.

It is found in the secreted. Depressant insect beta-toxins cause a transient contraction paralysis followed by a slow flaccid paralysis. They bind voltage-independently at site-4 of sodium channels (Nav) and shift the voltage of activation toward more negative potentials thereby affecting sodium channel activation and promoting spontaneous and repetitive firing. This toxin is active only on insects. In Leiurus hebraeus (Hebrew deathstalker scorpion), this protein is Beta-insect depressant toxin LqhIT2.